A 306-amino-acid chain; its full sequence is tRNA pseudouridine synthase B (306 aa).

D51 acts as the Nucleophile in catalysis.

It belongs to the pseudouridine synthase TruB family. Type 1 subfamily.

It carries out the reaction uridine(55) in tRNA = pseudouridine(55) in tRNA. In terms of biological role, responsible for synthesis of pseudouridine from uracil-55 in the psi GC loop of transfer RNAs. This Nocardia farcinica (strain IFM 10152) protein is tRNA pseudouridine synthase B.